Here is a 284-residue protein sequence, read N- to C-terminus: 2-dehydro-3-deoxyphosphooctonate aldolase (284 aa).

Belongs to the KdsA family.

It localises to the cytoplasm. The enzyme catalyses D-arabinose 5-phosphate + phosphoenolpyruvate + H2O = 3-deoxy-alpha-D-manno-2-octulosonate-8-phosphate + phosphate. It functions in the pathway carbohydrate biosynthesis; 3-deoxy-D-manno-octulosonate biosynthesis; 3-deoxy-D-manno-octulosonate from D-ribulose 5-phosphate: step 2/3. The protein operates within bacterial outer membrane biogenesis; lipopolysaccharide biosynthesis. The chain is 2-dehydro-3-deoxyphosphooctonate aldolase from Serratia proteamaculans (strain 568).